Here is a 741-residue protein sequence, read N- to C-terminus: ABC transporter D family member 2 (741 aa).

A run of 3 helical transmembrane segments spans residues 39–59 (GSLG…FSLV), 119–139 (FLSL…SVSI), and 260–280 (VVVM…VSGF). One can recognise an ABC transmembrane type-1 domain in the interval 131 to 409 (ARTMLSVSIA…LMVALSQAIG (279 aa)). The ABC transporter domain occupies 518-740 (IKFENVSIVS…DDDHLKKPLS (223 aa)). 551–558 (GPNGSGKS) provides a ligand contact to ATP.

It belongs to the ABC transporter superfamily. ABCD family. Peroxisomal fatty acyl CoA transporter (TC 3.A.1.203) subfamily.

The protein resides in the membrane. The sequence is that of ABC transporter D family member 2 (abcD2) from Dictyostelium discoideum (Social amoeba).